The primary structure comprises 201 residues: Small ribosomal subunit protein uS4c (201 aa).

Residues 20–43 are disordered; it reads GLTSKRPRAGSDLRNQSRSGKRSQ. One can recognise an S4 RNA-binding domain in the interval 89 to 149; that stretch reads MRLDNILFRL…DEQKSRALIQ (61 aa).

The protein belongs to the universal ribosomal protein uS4 family. In terms of assembly, part of the 30S ribosomal subunit. Contacts protein S5. The interaction surface between S4 and S5 is involved in control of translational fidelity.

It is found in the plastid. It localises to the chloroplast. Its function is as follows. One of the primary rRNA binding proteins, it binds directly to 16S rRNA where it nucleates assembly of the body of the 30S subunit. In terms of biological role, with S5 and S12 plays an important role in translational accuracy. The chain is Small ribosomal subunit protein uS4c (rps4) from Buxus microphylla (Littleleaf boxwood).